We begin with the raw amino-acid sequence, 281 residues long: Para-Rep C9 (281 aa).

Residues 1–95 (MSAVNWVFTL…VAGPWSYGEL (95 aa)) form the CRESS-DNA virus Rep endonuclease domain. An RCR-1 motif is present at residues 7 to 10 (VFTL). Residues Glu33 and His39 each contribute to the a divalent metal cation site. Residues 39–41 (HIQ) carry the RCR-2 motif. Positions 48-69 (KKAKMNTVKNIIGGNPHLEKMK) match the Nuclear localization signal motif. The active-site For DNA cleavage activity is Tyr78. Positions 78–81 (YAQK) match the RCR-3 motif. Glu83 is an a divalent metal cation binding site. The Nuclear localization signal signature appears at 95 to 101 (LLKKGSH). 178 to 180 (GKS) is an ATP binding site.

Belongs to the nanoviridea/circoviridae replication-associated protein family. Homooligomer (Potential). Rep binds to repeated DNA motifs (iterons). It depends on Mg(2+) as a cofactor. Mn(2+) serves as cofactor.

It is found in the host nucleus. The enzyme catalyses ATP + H2O = ADP + phosphate + H(+). Functionally, initiates and terminates the replication only of its own subviral DNA molecule. The closed circular ssDNA genome is first converted to a superhelical dsDNA. Rep binds a specific hairpin at the genome origin of replication. Introduces an endonucleolytic nick within the intergenic region of the genome, thereby initiating the rolling circle replication (RCR). Following cleavage, binds covalently to the 5'-phosphate of DNA as a tyrosyl ester. The cleavage gives rise to a free 3'-OH that serves as a primer for the cellular DNA polymerase. The polymerase synthesizes the (+) strand DNA by rolling circle mechanism. After one round of replication, a Rep-catalyzed nucleotidyl transfer reaction releases a circular single-stranded virus genome, thereby terminating the replication. Displays origin-specific DNA cleavage, nucleotidyl transferase, ATPase and helicase activities. In Faba bean necrotic yellows C9 alphasatellite (FBNYC9A), this protein is Para-Rep C9 (C9).